Consider the following 445-residue polypeptide: Selenocysteine lyase (445 aa).

Methionine 1 is modified (N-acetylmethionine). The segment at 1 to 28 is disordered; it reads MEAAVAPGRDAPAPAASQPSGCGKHNSP. Serine 129 bears the Phosphoserine mark. Position 259 is an N6-(pyridoxal phosphate)lysine (lysine 259). Cysteine 388 acts as the S-selanylcysteine intermediate in catalysis.

This sequence belongs to the class-V pyridoxal-phosphate-dependent aminotransferase family. As to quaternary structure, homodimer. The cofactor is pyridoxal 5'-phosphate.

It is found in the cytoplasm. The protein localises to the cytosol. It catalyses the reaction L-selenocysteine + AH2 = hydrogenselenide + L-alanine + A + H(+). In terms of biological role, catalyzes the decomposition of L-selenocysteine to L-alanine and elemental selenium. The polypeptide is Selenocysteine lyase (SCLY) (Homo sapiens (Human)).